The sequence spans 276 residues: Undecaprenyl-diphosphatase 1 (276 aa).

5 helical membrane-spanning segments follow: residues 85–105, 108–128, 187–207, 217–237, and 253–273; these read MNVVIATLPAIALALLFEKTI, VLFAPVPVAVALVVGGAVILW, VATEFSFFLAIPVIFGATLYE, VDSIGLFAIGLAAAFVSAFAC, and FAWYRIVFGLFVLLVGYSGWI.

The protein belongs to the UppP family.

It is found in the cell inner membrane. It catalyses the reaction di-trans,octa-cis-undecaprenyl diphosphate + H2O = di-trans,octa-cis-undecaprenyl phosphate + phosphate + H(+). Catalyzes the dephosphorylation of undecaprenyl diphosphate (UPP). Confers resistance to bacitracin. In Burkholderia thailandensis (strain ATCC 700388 / DSM 13276 / CCUG 48851 / CIP 106301 / E264), this protein is Undecaprenyl-diphosphatase 1.